We begin with the raw amino-acid sequence, 64 residues long: Conotoxin reg3k (64 aa).

Positions 1–20 (MMFKLGVLLTICLLLFPLTA) are cleaved as a signal peptide. Residues 21–48 (LQLDWDQPGDHMLDISSEIDDRWFDPVR) constitute a propeptide that is removed on maturation. Intrachain disulfides connect Cys-50–Cys-60, Cys-51–Cys-58, and Cys-56–Cys-61. Position 59 is a 4-hydroxyproline (Pro-59).

Expressed by the venom duct.

Its subcellular location is the secreted. This Conus regius (Crown cone) protein is Conotoxin reg3k.